Consider the following 120-residue polypeptide: Large-conductance mechanosensitive channel (120 aa).

Helical transmembrane passes span 7–27 and 64–84; these read EFALKGNVLDLAIAVVMGAAF and GLFIQSVIDFIIIAFALFIFV.

The protein belongs to the MscL family. In terms of assembly, homopentamer.

It is found in the cell membrane. Functionally, channel that opens in response to stretch forces in the membrane lipid bilayer. May participate in the regulation of osmotic pressure changes within the cell. This Staphylococcus aureus (strain Mu3 / ATCC 700698) protein is Large-conductance mechanosensitive channel.